Consider the following 115-residue polypeptide: Large ribosomal subunit protein bL19 (115 aa).

Belongs to the bacterial ribosomal protein bL19 family.

In terms of biological role, this protein is located at the 30S-50S ribosomal subunit interface and may play a role in the structure and function of the aminoacyl-tRNA binding site. This is Large ribosomal subunit protein bL19 from Streptococcus pyogenes serotype M1.